Reading from the N-terminus, the 250-residue chain is Endonuclease NucS 2 (250 aa).

It belongs to the NucS endonuclease family.

The protein localises to the cytoplasm. Functionally, cleaves both 3' and 5' ssDNA extremities of branched DNA structures. This chain is Endonuclease NucS 2, found in Halobacterium salinarum (strain ATCC 700922 / JCM 11081 / NRC-1) (Halobacterium halobium).